The primary structure comprises 29 residues: Cytochrome b6-f complex subunit 8 (29 aa).

The helical transmembrane segment at 3-23 threads the bilayer; sequence IVSLGWAFLMVVFSFSLSLVV.

The protein belongs to the PetN family. The 4 large subunits of the cytochrome b6-f complex are cytochrome b6, subunit IV (17 kDa polypeptide, PetD), cytochrome f and the Rieske protein, while the 4 small subunits are PetG, PetL, PetM and PetN. The complex functions as a dimer.

The protein resides in the plastid. Its subcellular location is the chloroplast thylakoid membrane. Its function is as follows. Component of the cytochrome b6-f complex, which mediates electron transfer between photosystem II (PSII) and photosystem I (PSI), cyclic electron flow around PSI, and state transitions. This chain is Cytochrome b6-f complex subunit 8, found in Chlorokybus atmophyticus (Soil alga).